Consider the following 357-residue polypeptide: Zinc finger protein 830 (357 aa).

Residues 47-69 (CVVCNIQIKSELLWPAHILGKQH) form a C2H2-type zinc finger. 3 disordered regions span residues 98 to 126 (RKGS…TKLP), 157 to 194 (DDDE…ADRL), and 231 to 255 (ALPE…PKDQ). The segment covering 99–115 (KGSEPENQESKRIKGTE) has biased composition (basic and acidic residues). Over residues 157–168 (DDDEVEGEEYEN) the composition is skewed to acidic residues. Over residues 242 to 255 (ADAKVRKVDAPKDQ) the composition is skewed to basic and acidic residues. Residues 279-325 (AEEDEEGRLDRQIDEIDEQIECYRRVEHLRDLKDTLQDAKMEVLKSK) adopt a coiled-coil conformation.

Its subcellular location is the nucleus. It localises to the chromosome. The protein resides in the nucleus speckle. Its function is as follows. May act as an important regulator of the cell cycle that participates in the maintenance of genome integrity. This is Zinc finger protein 830 from Xenopus tropicalis (Western clawed frog).